The chain runs to 1295 residues: DNA-directed RNA polymerase subunit beta' (1295 aa).

Positions 60, 62, 75, and 78 each coordinate Zn(2+). Positions 516, 518, and 520 each coordinate Mg(2+). Positions 841, 914, 921, and 924 each coordinate Zn(2+).

The protein belongs to the RNA polymerase beta' chain family. As to quaternary structure, the RNAP catalytic core consists of 2 alpha, 1 beta, 1 beta' and 1 omega subunit. When a sigma factor is associated with the core the holoenzyme is formed, which can initiate transcription. It depends on Mg(2+) as a cofactor. Requires Zn(2+) as cofactor.

It catalyses the reaction RNA(n) + a ribonucleoside 5'-triphosphate = RNA(n+1) + diphosphate. Its function is as follows. DNA-dependent RNA polymerase catalyzes the transcription of DNA into RNA using the four ribonucleoside triphosphates as substrates. The sequence is that of DNA-directed RNA polymerase subunit beta' from Dehalococcoides mccartyi (strain ATCC BAA-2100 / JCM 16839 / KCTC 5957 / BAV1).